A 66-amino-acid polypeptide reads, in one-letter code: Metallothionein (66 aa).

Position 1 is an N-acetylserine (Ser-1). Residues Cys-9, Cys-13, Cys-18, Cys-20, Cys-24, Cys-26, Cys-30, Cys-32, Cys-35, Cys-38, Cys-40, Cys-45, Cys-47, Cys-51, Cys-57, Cys-59, Cys-63, and Cys-65 each contribute to the Cd(2+) site.

It belongs to the metallothionein superfamily. Type 2 family.

Its function is as follows. The metallothioneins are involved in the cellular sequestration of toxic metal ions and regulation of essential trace elements. This Arianta arbustorum (Land snail) protein is Metallothionein.